We begin with the raw amino-acid sequence, 886 residues long: Leucine--tRNA ligase (886 aa).

Positions 51–61 match the 'HIGH' region motif; the sequence is PYPSGRIHMGH. Residues 644 to 648 carry the 'KMSKS' region motif; that stretch reads KMSKS. Lys-647 contacts ATP.

It belongs to the class-I aminoacyl-tRNA synthetase family.

It is found in the cytoplasm. The enzyme catalyses tRNA(Leu) + L-leucine + ATP = L-leucyl-tRNA(Leu) + AMP + diphosphate. The protein is Leucine--tRNA ligase of Bartonella tribocorum (strain CIP 105476 / IBS 506).